Consider the following 160-residue polypeptide: Crossover junction endodeoxyribonuclease RuvC (160 aa).

Residues aspartate 7, glutamate 70, and aspartate 142 contribute to the active site. Positions 7, 70, and 142 each coordinate Mg(2+).

This sequence belongs to the RuvC family. As to quaternary structure, homodimer which binds Holliday junction (HJ) DNA. The HJ becomes 2-fold symmetrical on binding to RuvC with unstacked arms; it has a different conformation from HJ DNA in complex with RuvA. In the full resolvosome a probable DNA-RuvA(4)-RuvB(12)-RuvC(2) complex forms which resolves the HJ. Mg(2+) is required as a cofactor.

The protein resides in the cytoplasm. It catalyses the reaction Endonucleolytic cleavage at a junction such as a reciprocal single-stranded crossover between two homologous DNA duplexes (Holliday junction).. Functionally, the RuvA-RuvB-RuvC complex processes Holliday junction (HJ) DNA during genetic recombination and DNA repair. Endonuclease that resolves HJ intermediates. Cleaves cruciform DNA by making single-stranded nicks across the HJ at symmetrical positions within the homologous arms, yielding a 5'-phosphate and a 3'-hydroxyl group; requires a central core of homology in the junction. The consensus cleavage sequence is 5'-(A/T)TT(C/G)-3'. Cleavage occurs on the 3'-side of the TT dinucleotide at the point of strand exchange. HJ branch migration catalyzed by RuvA-RuvB allows RuvC to scan DNA until it finds its consensus sequence, where it cleaves and resolves the cruciform DNA. This Ehrlichia ruminantium (strain Welgevonden) protein is Crossover junction endodeoxyribonuclease RuvC.